Here is a 200-residue protein sequence, read N- to C-terminus: dITP/XTP pyrophosphatase (200 aa).

7 to 12 is a binding site for substrate; that stretch reads SNNYHK. Asp-68 (proton acceptor) is an active-site residue. Asp-68 is a Mg(2+) binding site. Residues Ser-69, 147 to 150, Lys-170, and 175 to 176 each bind substrate; these read FGYD and HR.

This sequence belongs to the HAM1 NTPase family. As to quaternary structure, homodimer. Mg(2+) serves as cofactor.

The catalysed reaction is XTP + H2O = XMP + diphosphate + H(+). It carries out the reaction dITP + H2O = dIMP + diphosphate + H(+). It catalyses the reaction ITP + H2O = IMP + diphosphate + H(+). Pyrophosphatase that catalyzes the hydrolysis of nucleoside triphosphates to their monophosphate derivatives, with a high preference for the non-canonical purine nucleotides XTP (xanthosine triphosphate), dITP (deoxyinosine triphosphate) and ITP. Seems to function as a house-cleaning enzyme that removes non-canonical purine nucleotides from the nucleotide pool, thus preventing their incorporation into DNA/RNA and avoiding chromosomal lesions. This is dITP/XTP pyrophosphatase from Acholeplasma laidlawii (strain PG-8A).